A 347-amino-acid chain; its full sequence is Tetraacyldisaccharide 4'-kinase (347 aa).

65–72 is a binding site for ATP; that stretch reads FVGGTGKT.

Belongs to the LpxK family.

The enzyme catalyses a lipid A disaccharide + ATP = a lipid IVA + ADP + H(+). Its pathway is glycolipid biosynthesis; lipid IV(A) biosynthesis; lipid IV(A) from (3R)-3-hydroxytetradecanoyl-[acyl-carrier-protein] and UDP-N-acetyl-alpha-D-glucosamine: step 6/6. In terms of biological role, transfers the gamma-phosphate of ATP to the 4'-position of a tetraacyldisaccharide 1-phosphate intermediate (termed DS-1-P) to form tetraacyldisaccharide 1,4'-bis-phosphate (lipid IVA). The protein is Tetraacyldisaccharide 4'-kinase of Janthinobacterium sp. (strain Marseille) (Minibacterium massiliensis).